Here is a 280-residue protein sequence, read N- to C-terminus: MNIKAYAKINISLDVIGKREDGYHLLKMIMQNIDLYDIVQVEKIPNGIKLKCNKPYVPTDERNLAYKAAKLFKETYDIKSGIYINIEKNIPVSAGLAGGSTDAAAVLKIMNKMFNINVPQSELMDLGLKLGADVPYCICGGTALCEGIGEKVTKLKPFTDKILVVVKPPFGVSTKEVYKAFDLSKVIFHPKTNELISNIEKNNIDFIANNMKNLLENVTLGRYKIISTIKEEINTCGALGSMMSGSGPTVFGFFDDILKAQKCYEKMKEKYVDVFITRTI.

Lysine 8 is an active-site residue. 91 to 101 (PVSAGLAGGST) contacts ATP. Aspartate 133 is an active-site residue.

The protein belongs to the GHMP kinase family. IspE subfamily.

The catalysed reaction is 4-CDP-2-C-methyl-D-erythritol + ATP = 4-CDP-2-C-methyl-D-erythritol 2-phosphate + ADP + H(+). It participates in isoprenoid biosynthesis; isopentenyl diphosphate biosynthesis via DXP pathway; isopentenyl diphosphate from 1-deoxy-D-xylulose 5-phosphate: step 3/6. In terms of biological role, catalyzes the phosphorylation of the position 2 hydroxy group of 4-diphosphocytidyl-2C-methyl-D-erythritol. In Clostridium botulinum (strain Eklund 17B / Type B), this protein is 4-diphosphocytidyl-2-C-methyl-D-erythritol kinase.